The chain runs to 128 residues: Phosphoribosyl-AMP cyclohydrolase (128 aa).

D86 provides a ligand contact to Mg(2+). C87 contacts Zn(2+). Mg(2+) is bound by residues D88 and D90. Zn(2+)-binding residues include C103 and C110.

The protein belongs to the PRA-CH family. In terms of assembly, homodimer. It depends on Mg(2+) as a cofactor. Zn(2+) serves as cofactor.

The protein localises to the cytoplasm. The catalysed reaction is 1-(5-phospho-beta-D-ribosyl)-5'-AMP + H2O = 1-(5-phospho-beta-D-ribosyl)-5-[(5-phospho-beta-D-ribosylamino)methylideneamino]imidazole-4-carboxamide. The protein operates within amino-acid biosynthesis; L-histidine biosynthesis; L-histidine from 5-phospho-alpha-D-ribose 1-diphosphate: step 3/9. Catalyzes the hydrolysis of the adenine ring of phosphoribosyl-AMP. This Roseobacter denitrificans (strain ATCC 33942 / OCh 114) (Erythrobacter sp. (strain OCh 114)) protein is Phosphoribosyl-AMP cyclohydrolase.